Here is a 361-residue protein sequence, read N- to C-terminus: MASVTLRNVRKTYPGGFEAIKGIDFAVGDGQFCVLVGPSGCGKSTLLRMVAGLETITAGEIDIGGRVVNTIEPADRDIAMVFQNYALYPHMSVYNNMAYGLRNRGMKKPDIDARVREAARILEIEPLLQRKPKQLSGGQRQRVAMGRAIVRQPKVFLFDEPLSNLDAKLRIAMRVEIRKLQRRLATTAIYVTHDQLEAMTLADQLVVMNGGVVEQIGSPLEVYRKPATTFVASFIGAPPMNLMQLDGDALRGQLAGGAGAGVLGIRPEDLTLLTDGSAPEGGVAIELRIEAVERVGPESFVYGSRSNGGAAVSPHPGERPAGEIIVRVPGEIAPELGARVTVAAPRQKLHLFDAGGRRRID.

The region spanning Val4–Ile235 is the ABC transporter domain. ATP is bound at residue Gly37 to Ser44.

Belongs to the ABC transporter superfamily. sn-glycerol-3-phosphate importer (TC 3.A.1.1.3) family. In terms of assembly, the complex is composed of two ATP-binding proteins (UgpC), two transmembrane proteins (UgpA and UgpE) and a solute-binding protein (UgpB).

It is found in the cell inner membrane. It catalyses the reaction sn-glycerol 3-phosphate(out) + ATP + H2O = sn-glycerol 3-phosphate(in) + ADP + phosphate + H(+). Part of the ABC transporter complex UgpBAEC involved in sn-glycerol-3-phosphate (G3P) import. Responsible for energy coupling to the transport system. The chain is sn-glycerol-3-phosphate import ATP-binding protein UgpC from Rhodopseudomonas palustris (strain BisA53).